The sequence spans 394 residues: Ornithine aminotransferase 1 (394 aa).

Lys-252 bears the N6-(pyridoxal phosphate)lysine mark.

The protein belongs to the class-III pyridoxal-phosphate-dependent aminotransferase family. OAT subfamily. Pyridoxal 5'-phosphate serves as cofactor.

It is found in the cytoplasm. It catalyses the reaction a 2-oxocarboxylate + L-ornithine = L-glutamate 5-semialdehyde + an L-alpha-amino acid. It functions in the pathway amino-acid biosynthesis; L-proline biosynthesis; L-glutamate 5-semialdehyde from L-ornithine: step 1/1. Functionally, catalyzes the interconversion of ornithine to glutamate semialdehyde. The polypeptide is Ornithine aminotransferase 1 (Staphylococcus aureus (strain Mu50 / ATCC 700699)).